The chain runs to 214 residues: Adenylate kinase (214 aa).

An ATP-binding site is contributed by 10 to 15; that stretch reads GGGKGT. Residues 30–59 are NMP; the sequence is STGDMFRENVKGGTELGLKAKEYMDAGQLV. Residues threonine 31, arginine 36, 57–59, 85–88, and glutamine 92 each bind AMP; these read QLV and GFPR. An LID region spans residues 126–163; it reads GRRVCRVCGATFHVLFNAPKEDGKCDKCGGELYQRSDD. Arginine 127 contributes to the ATP binding site. Zn(2+) is bound by residues cysteine 130 and cysteine 133. Residue 136–137 coordinates ATP; it reads TF. The Zn(2+) site is built by cysteine 150 and cysteine 153. AMP-binding residues include arginine 160 and arginine 171. An ATP-binding site is contributed by glutamine 199.

It belongs to the adenylate kinase family. Monomer.

It localises to the cytoplasm. It catalyses the reaction AMP + ATP = 2 ADP. It functions in the pathway purine metabolism; AMP biosynthesis via salvage pathway; AMP from ADP: step 1/1. In terms of biological role, catalyzes the reversible transfer of the terminal phosphate group between ATP and AMP. Plays an important role in cellular energy homeostasis and in adenine nucleotide metabolism. The chain is Adenylate kinase from Desulforudis audaxviator (strain MP104C).